The primary structure comprises 215 residues: N-(5'-phosphoribosyl)anthranilate isomerase (215 aa).

This sequence belongs to the TrpF family.

It carries out the reaction N-(5-phospho-beta-D-ribosyl)anthranilate = 1-(2-carboxyphenylamino)-1-deoxy-D-ribulose 5-phosphate. It functions in the pathway amino-acid biosynthesis; L-tryptophan biosynthesis; L-tryptophan from chorismate: step 3/5. This Paramagnetospirillum magneticum (strain ATCC 700264 / AMB-1) (Magnetospirillum magneticum) protein is N-(5'-phosphoribosyl)anthranilate isomerase.